A 1700-amino-acid polypeptide reads, in one-letter code: Leucine-rich repeat-containing protein 37A2 (1700 aa).

The signal sequence occupies residues 1–35 (MSSAQCPALVCVMSRLRFWGPWPLLMWQLLWLLVK). Residues 36–1582 (EAQPLEWVKD…VPGYGYTDKL (1547 aa)) are Extracellular-facing. Residues 54–65 (LGPPDSWSSHSS) show a composition bias toward polar residues. Disordered stretches follow at residues 54–104 (LGPP…ESTE), 130–156 (QQDL…DPAQ), 169–534 (QLST…AQPP), 559–580 (TEVE…KVVP), 619–642 (PEPT…KHPE), and 729–752 (TKPT…PDLG). An LRR 1 repeat occupies 137-160 (LSPQERLPVSPKKLKKDPAQRWSL). Polar residues-rich tracts occupy residues 169-189 (QLST…STDT) and 223-237 (ETQN…QSSS). 2 LRR repeats span residues 230–253 (LEDI…LEEE) and 267–290 (ESSM…EDQA). Residues 238–249 (LQQEAPAQLPQL) are compositionally biased toward low complexity. A glycan (N-linked (GlcNAc...) asparagine) is linked at Asn296. A compositionally biased stretch (polar residues) spans 307-326 (TITSEPTNETESSQAQQETP). The segment covering 358–368 (SEQQQPVQPSE) has biased composition (low complexity). The span at 433–446 (LVHQEATTRLSGSG) shows a compositional bias: polar residues. The segment covering 482–493 (SPEPINNENPSP) has biased composition (low complexity). The segment covering 729–749 (TKPTTEVKPSPTTEETSTQPP) has biased composition (low complexity). LRR repeat units lie at residues 864–887 (NGTF…VWKA), 888–911 (YSWT…SFEG), 912–935 (LLSL…TFEP), 937–959 (PFLK…TFQA), 963–987 (MQFL…LFKL), and 1002–1027 (LTTL…MACC). The N-linked (GlcNAc...) asparagine glycan is linked to Asn1079. The stretch at 1124–1146 (LPYFSAVNLDVKSLLLPFIKLPT) is one LRR 10 repeat. Composition is skewed to basic and acidic residues over residues 1182–1191 (VGRQSIRREQ) and 1201–1216 (AEEK…EVEQ). Disordered stretches follow at residues 1182 to 1227 (VGRQ…EKLA) and 1309 to 1328 (KTRS…PKVR). Residues 1583–1603 (ILALIVTGILTILIILFCLIV) traverse the membrane as a helical segment. Residues 1604–1700 (ICCHRRSLQE…TEEEESEALP (97 aa)) lie on the Cytoplasmic side of the membrane. Residues 1675-1685 (NEDKILNRDPG) show a composition bias toward basic and acidic residues. A disordered region spans residues 1675–1700 (NEDKILNRDPGDSEAPTEEEESEALP). A compositionally biased stretch (acidic residues) spans 1689–1700 (APTEEEESEALP).

Belongs to the LRRC37A family.

Its subcellular location is the membrane. The chain is Leucine-rich repeat-containing protein 37A2 (LRRC37A2) from Homo sapiens (Human).